The chain runs to 501 residues: L-arabinose isomerase (501 aa).

4 residues coordinate Mn(2+): Glu-306, Glu-333, His-350, and His-449.

This sequence belongs to the arabinose isomerase family. It depends on Mn(2+) as a cofactor.

The enzyme catalyses beta-L-arabinopyranose = L-ribulose. The protein operates within carbohydrate degradation; L-arabinose degradation via L-ribulose; D-xylulose 5-phosphate from L-arabinose (bacterial route): step 1/3. Functionally, catalyzes the conversion of L-arabinose to L-ribulose. The polypeptide is L-arabinose isomerase (Mycolicibacterium smegmatis (strain ATCC 700084 / mc(2)155) (Mycobacterium smegmatis)).